The following is a 272-amino-acid chain: Ribonuclease 3 (272 aa).

The segment covering 1-20 has biased composition (polar residues); the sequence is MTDDVTNVEQPSTASEQQPQ. A disordered region spans residues 1-38; sequence MTDDVTNVEQPSTASEQQPQDVPAAEPSAAKKRRANKA. Residues 44–171 form the RNase III domain; that stretch reads AAAIEQRLGH…VIGAIYLDGG (128 aa). Position 84 (Glu-84) interacts with Mg(2+). The active site involves Asp-88. Mg(2+)-binding residues include Asp-157 and Glu-160. Glu-160 is a catalytic residue. In terms of domain architecture, DRBM spans 196 to 265; the sequence is DPKTVLQEWA…ASAMLAREGV (70 aa).

This sequence belongs to the ribonuclease III family. In terms of assembly, homodimer. Mg(2+) serves as cofactor.

Its subcellular location is the cytoplasm. The enzyme catalyses Endonucleolytic cleavage to 5'-phosphomonoester.. In terms of biological role, digests double-stranded RNA. Involved in the processing of primary rRNA transcript to yield the immediate precursors to the large and small rRNAs (23S and 16S). Processes some mRNAs, and tRNAs when they are encoded in the rRNA operon. Processes pre-crRNA and tracrRNA of type II CRISPR loci if present in the organism. The sequence is that of Ribonuclease 3 from Rhodopseudomonas palustris (strain ATCC BAA-98 / CGA009).